Here is a 118-residue protein sequence, read N- to C-terminus: UPF0102 protein Sde_3146 (118 aa).

Belongs to the UPF0102 family.

The chain is UPF0102 protein Sde_3146 from Saccharophagus degradans (strain 2-40 / ATCC 43961 / DSM 17024).